Consider the following 114-residue polypeptide: UPF0342 protein SERP1381 (114 aa).

It belongs to the UPF0342 family.

This chain is UPF0342 protein SERP1381, found in Staphylococcus epidermidis (strain ATCC 35984 / DSM 28319 / BCRC 17069 / CCUG 31568 / BM 3577 / RP62A).